A 66-amino-acid chain; its full sequence is Large ribosomal subunit protein bL33c (66 aa).

This sequence belongs to the bacterial ribosomal protein bL33 family.

Its subcellular location is the plastid. It is found in the chloroplast. This is Large ribosomal subunit protein bL33c from Illicium oligandrum (Star anise).